A 502-amino-acid polypeptide reads, in one-letter code: 4,4'-diapophytoene desaturase (4,4'-diaponeurosporene-forming) (502 aa).

5–17 (VIGAGVTGLAAAA) provides a ligand contact to FAD.

It belongs to the carotenoid/retinoid oxidoreductase family. CrtN subfamily.

It catalyses the reaction 15-cis-4,4'-diapophytoene + 3 FAD + 3 H(+) = all-trans-4,4'-diaponeurosporene + 3 FADH2. The protein operates within carotenoid biosynthesis; staphyloxanthin biosynthesis; staphyloxanthin from farnesyl diphosphate: step 2/5. Functionally, involved in the biosynthesis of the yellow-orange carotenoid staphyloxanthin, which plays a role in the virulence via its protective function against oxidative stress. Catalyzes three successive dehydrogenation reactions that lead to the introduction of three double bonds into 4,4'-diapophytoene (dehydrosqualene), with 4,4'-diapophytofluene and 4,4'-diapo-zeta-carotene as intermediates, and 4,4'-diaponeurosporene (the major deep-yellow pigment in staphylococci strains) as the end product. This chain is 4,4'-diapophytoene desaturase (4,4'-diaponeurosporene-forming), found in Staphylococcus aureus (strain bovine RF122 / ET3-1).